Here is a 313-residue protein sequence, read N- to C-terminus: tRNA dimethylallyltransferase (313 aa).

Gly-11–Ser-18 provides a ligand contact to ATP. Thr-13 to Ser-18 is a binding site for substrate. Interaction with substrate tRNA regions lie at residues Asp-36–Thr-39, Gln-160–Arg-164, and Arg-244–Arg-249.

This sequence belongs to the IPP transferase family. In terms of assembly, monomer. It depends on Mg(2+) as a cofactor.

It carries out the reaction adenosine(37) in tRNA + dimethylallyl diphosphate = N(6)-dimethylallyladenosine(37) in tRNA + diphosphate. Its function is as follows. Catalyzes the transfer of a dimethylallyl group onto the adenine at position 37 in tRNAs that read codons beginning with uridine, leading to the formation of N6-(dimethylallyl)adenosine (i(6)A). In Bordetella pertussis (strain Tohama I / ATCC BAA-589 / NCTC 13251), this protein is tRNA dimethylallyltransferase.